A 452-amino-acid chain; its full sequence is Putative purine permease CPE0397 (452 aa).

Helical transmembrane passes span 34-54 (IFAA…SLGF), 58-78 (VTTA…IIQA), 83-103 (KVGA…SPAI), 108-128 (VLGL…EVIL), 138-158 (FFPP…LLPV), 172-192 (YASL…LLLN), 201-221 (SASI…LGLV), 250-270 (MAFI…LKAI), 326-346 (AVMA…AAII), 348-368 (GIPN…VAAA), 383-403 (LLII…PDVI), and 412-432 (MIFS…NAVL).

The protein belongs to the nucleobase:cation symporter-2 (NCS2) (TC 2.A.40) family.

The protein resides in the cell membrane. The polypeptide is Putative purine permease CPE0397 (cpx) (Clostridium perfringens (strain 13 / Type A)).